We begin with the raw amino-acid sequence, 118 residues long: Large ribosomal subunit protein uL18 (118 aa).

The protein belongs to the universal ribosomal protein uL18 family. In terms of assembly, part of the 50S ribosomal subunit; part of the 5S rRNA/L5/L18/L25 subcomplex. Contacts the 5S and 23S rRNAs.

Its function is as follows. This is one of the proteins that bind and probably mediate the attachment of the 5S RNA into the large ribosomal subunit, where it forms part of the central protuberance. The sequence is that of Large ribosomal subunit protein uL18 from Campylobacter jejuni subsp. jejuni serotype O:6 (strain 81116 / NCTC 11828).